The chain runs to 644 residues: Sodium/hydrogen exchanger 9 (644 aa).

The Lumenal segment spans residues 1 to 20 (MAGQLRLTSGKDEDHFQHQG). Residues 21 to 41 (AVELLAFNFLLILTILTIWLF) form a helical membrane-spanning segment. Over 42-45 (KNHR) the chain is Cytoplasmic. The helical transmembrane segment at 46–66 (FRFLHETGGAMVYGLIMGLIL) threads the bilayer. At 67-126 (RYATAPTDIDSGTVYNCGKLLFSPSTLLVNITDQVYEYKYQREINQHNISPHQGNAILEK) the chain is on the lumenal side. The chain crosses the membrane as a helical span at residues 127 to 147 (MTFDPEIFFNVLLPPIIFHAG). Residues 148-164 (YSLKKRHFFQNLGSILT) are Cytoplasmic-facing. The helical transmembrane segment at 165-185 (YAFLGTAISCVVIGLIMYGFV) threads the bilayer. At 186–203 (KAMVHAGQLKSGDFHFTD) the chain is on the lumenal side. Residues 204–224 (CLFFGSLMSATDPVTVLAIFH) traverse the membrane as a helical segment. At 225–235 (ELHVDPDLYTL) the chain is on the cytoplasmic side. A helical membrane pass occupies residues 236–256 (LFGESVLNDAVAIVLTYSISI). Over 257–277 (YSPKENPNAFDTAAFFQSVGN) the chain is Lumenal. The chain crosses the membrane as a helical span at residues 278-298 (FLGIFAGSFAMGSAYAVVTAL). Topologically, residues 299-309 (LTKFTKLREFP) are cytoplasmic. A helical membrane pass occupies residues 310-327 (MLETGLFFLLSWSAFLSA). The Lumenal portion of the chain corresponds to 328–333 (EAAGLT). The chain crosses the membrane as a helical span at residues 334 to 350 (GIVAVLFCGVTQAHYTY). Residues 351–364 (NNLSSDSKLRTKQL) lie on the Cytoplasmic side of the membrane. The chain crosses the membrane as a helical span at residues 365-385 (FEFMNFLAENVIFCYMGLALF). A topological domain (lumenal) is located at residue T386. Residues 387-407 (FQNHIFNALFILGAFLAIFVA) traverse the membrane as a helical segment. The Cytoplasmic portion of the chain corresponds to 408-429 (RACNIYPLSFLLNLGRKQKIPW). Residues 430-450 (NFQHMMMFSGLRGAIAFALAI) traverse the membrane as a helical segment. Residues 451–465 (RNTESQPKQMMFTTT) lie on the Lumenal side of the membrane. A helical transmembrane segment spans residues 466–486 (LLLVFFTVWVFGGGTTPMLTW). Residues 487 to 644 (LQIRVGVDLD…EQTRGQPQMD (158 aa)) lie on the Cytoplasmic side of the membrane.

The protein belongs to the monovalent cation:proton antiporter 1 (CPA1) transporter (TC 2.A.36) family. In terms of assembly, homodimer; phosphatidylinositol-4,5-bisphosphate (PIP2) and phosphatidylinositol 3,4,5-trisphosphate (PIP3) could be involved in the dimer stabilization. Interacts (via the C-terminus) with RACK1. Interacts with CHP1. As to expression, expressed in hair bundles and in vestibular hair bundles. Expressed in brain.

Its subcellular location is the late endosome membrane. It is found in the early endosome membrane. It localises to the recycling endosome membrane. The protein resides in the cell membrane. The protein localises to the cytoplasmic vesicle. Its subcellular location is the phagosome membrane. It carries out the reaction Na(+)(in) + H(+)(out) = Na(+)(out) + H(+)(in). The catalysed reaction is K(+)(in) + H(+)(out) = K(+)(out) + H(+)(in). Functionally, endosomal Na(+), K(+)/H(+) antiporter. Mediates the electroneutral exchange of endosomal luminal H(+) for a cytosolic Na(+) or K(+). By facilitating proton efflux, SLC9A9 counteracts the acidity generated by vacuolar (V)-ATPase, thereby limiting luminal acidification. Regulates organellar pH and consequently, endosome maturation and endocytic trafficking of plasma membrane receptors and neurotransporters. Promotes the recycling of transferrin receptors back to the cell surface to facilitate additional iron uptake in the brain. Regulates synaptic transmission by regulating the luminal pH of axonal endosomes. Regulates phagosome lumenal pH, thus affecting phagosome maturation, and consequently, microbicidal activity in macrophages. Can also be active at the cell surface of specialized cells, e.g., in the inner ear hair bundles uses the high K(+) of the endolymph to regulate intracelular pH. This is Sodium/hydrogen exchanger 9 (Slc9a9) from Rattus norvegicus (Rat).